A 105-amino-acid polypeptide reads, in one-letter code: Gastrin/cholecystokinin-like peptide (105 aa).

The signal sequence occupies residues 1-20; sequence MKTKVFLGLILSAAVTACLC. Positions 21–38 are excised as a propeptide; the sequence is RPAAKAPGGSHRPTSSLA. The tract at residues 24 to 51 is disordered; it reads AKAPGGSHRPTSSLARRDWPEPPSQEQQ. Tyrosine 87 bears the Sulfotyrosine mark. Residue phenylalanine 93 is modified to Phenylalanine amide. Positions 97–105 are excised as a propeptide; that stretch reads STEDAADAA.

It belongs to the gastrin/cholecystokinin family.

Its subcellular location is the secreted. In terms of biological role, potent stimulus of gastric acid, but not of pancreatic secretion. This Gallus gallus (Chicken) protein is Gastrin/cholecystokinin-like peptide.